We begin with the raw amino-acid sequence, 103 residues long: Small ribosomal subunit protein uS10 (103 aa).

It belongs to the universal ribosomal protein uS10 family. As to quaternary structure, part of the 30S ribosomal subunit.

Functionally, involved in the binding of tRNA to the ribosomes. This Chlorobium chlorochromatii (strain CaD3) protein is Small ribosomal subunit protein uS10.